The sequence spans 376 residues: MFPKIFLTAATALLSAKSTFAQTYSSCNPLFTTGCPANTALGKSIDVDFTSGSVNSFDGSGDITYDSNGASFTVAKSGDAPTLSSIFYIMFGKVQITMKAAPGAGIVSTLVLQSDDLDEIDMEWLGADDTEVQTNYFGKGKVTDYNRGAFNPAANNQGEFITYTIEWTSEQVVWSVGSTVVRVLTPATADTDQYPQSPMQIKFGAWSGGDSSNAAGTISWARGPTDYSNGPFTMVVQSIDVSDYSTGTQYKYGDQSGDWTSIEAIGGSVNGNVPASASSIQTAGAAAVTSSSPTIPAGINNGNSATRTGYPWVAGTQTVSEVTWSTGPSIPSGWEISSEGKIVPVSASPINISRINPLLLCGPFTFFFFAAIRRWP.

Residues 1–21 (MFPKIFLTAATALLSAKSTFA) form the signal peptide. The region spanning 22-229 (QTYSSCNPLF…WARGPTDYSN (208 aa)) is the GH16 domain. Cys27 and Cys35 are oxidised to a cystine. Glu119 acts as the Nucleophile in catalysis. The active-site Proton donor is Glu123. Chitin is bound by residues Glu123, Lys202, Trp206, and Thr217. The GPI-anchor amidated serine moiety is linked to residue Ser346. A propeptide spans 347 to 376 (ASPINISRINPLLLCGPFTFFFFAAIRRWP) (removed in mature form). The N-linked (GlcNAc...) asparagine glycan is linked to Asn351.

This sequence belongs to the glycosyl hydrolase 16 family. CRH1 subfamily.

The protein localises to the cell membrane. The enzyme catalyses Random endo-hydrolysis of N-acetyl-beta-D-glucosaminide (1-&gt;4)-beta-linkages in chitin and chitodextrins.. In terms of biological role, dual chitinase/transglycosylase that plays a role in cell wall architecture. Chitinase and transglycosylase activities are coupled. Required for the polysaccharide cross-linking at the septa and the cell wall. More specifically, transfers chitin to 1,6-beta-glucan in the cell wall. The protein is Crh-like protein 4 of Botryotinia fuckeliana (strain B05.10) (Noble rot fungus).